The following is a 250-amino-acid chain: ATP synthase subunit a (250 aa).

6 consecutive transmembrane segments (helical) span residues 31–51 (SAYMFLSVGVISLLMIGGMAG), 85–105 (FFPLVFSLFMFIAVSNLIGII), 115–135 (LIVTVALALLVFVIVLFYGLY), 144–164 (LFVPSGVPVYILPLVVFIEVI), 194–214 (FVGMLGALGFLGWMGAILPLG), and 217–237 (VAVTALEILVAFLQAYVFTIL).

It belongs to the ATPase A chain family. F-type ATPases have 2 components, CF(1) - the catalytic core - and CF(0) - the membrane proton channel. CF(1) has five subunits: alpha(3), beta(3), gamma(1), delta(1), epsilon(1). CF(0) has four main subunits: a, b, b' and c.

The protein localises to the cell inner membrane. Its function is as follows. Key component of the proton channel; it plays a direct role in the translocation of protons across the membrane. The polypeptide is ATP synthase subunit a (Rhodopseudomonas palustris (strain BisB5)).